An 803-amino-acid polypeptide reads, in one-letter code: Bromodomain-containing protein 2 (803 aa).

Position 1 is an N-acetylmethionine (methionine 1). A disordered region spans residues 1–28 (MLQNVTPHSKLPGEGNAGLLGLGPEAAA). Threonine 6 is subject to Phosphothreonine. Serine 37 carries the post-translational modification Phosphoserine. A disordered region spans residues 53–73 (ALQLTPANPPPPEVSNPKKPG). The Bromo 1 domain occupies 74 to 180 (RVTNQLQYLH…KIFLQKVASM (107 aa)). 6 residues coordinate a protein: aspartate 112, tyrosine 155, asparagine 156, lysine 157, aspartate 160, and aspartate 161. Disordered stretches follow at residues 268-349 (PPAQ…LSEQ), 456-653 (EPLE…RQLS), and 739-803 (EKRL…SDSG). Residues 285–298 (TTTPTPTAILAPGS) show a composition bias toward low complexity. Phosphoserine is present on residues serine 298, serine 301, and serine 305. Residues 316-332 (MRRESGRPIKPPRKDLP) are compositionally biased toward basic and acidic residues. Positions 344–453 (GKLSEQLKHC…DVFEFRYAKM (110 aa)) constitute a Bromo 2 domain. Over residues 481-515 (SSEESSSESSSEEDEEEDEEEEEEEEESESSDSEE) the composition is skewed to acidic residues. Over residues 545–567 (KPKRKREKKEKKKKRKAEKHRGR) the composition is skewed to basic residues. A Nuclear localization signal motif is present at residues 556–560 (KKKRK). The region spanning 634 to 716 (DSEEEEESRP…SCLRKKPRKP (83 aa)) is the NET domain. At serine 635 the chain carries Phosphoserine. Positions 641-652 (SRPMSYDEKRQL) are enriched in basic and acidic residues. Positions 777 to 797 (SASSSSSDSSSSSSSSSSSDT) are enriched in low complexity.

It belongs to the BET family. In terms of assembly, homodimer. Interacts with E2F1. Interacts with (acetylated) STAT3; promoting STAT3 recruitment to chromatin. Interacts with CTCF; promoting BRD2 recruitment to chromatin.

It localises to the nucleus. It is found in the chromosome. Functionally, chromatin reader protein that specifically recognizes and binds histone H4 acetylated at 'Lys-5' and 'Lys-12' (H4K5ac and H4K12ac, respectively), thereby controlling gene expression and remodeling chromatin structures. Recruits transcription factors and coactivators to target gene sites, and activates RNA polymerase II machinery for transcriptional elongation. Plays a key role in genome compartmentalization via its association with CTCF and cohesin: recruited to chromatin by CTCF and promotes formation of topologically associating domains (TADs) via its ability to bind acetylated histones, contributing to CTCF boundary formation and enhancer insulation. Also recognizes and binds acetylated non-histone proteins, such as STAT3. Involved in inflammatory response by regulating differentiation of naive CD4(+) T-cells into T-helper Th17: recognizes and binds STAT3 acetylated at 'Lys-87', promoting STAT3 recruitment to chromatin. In addition to acetylated lysines, also recognizes and binds lysine residues on histones that are both methylated and acetylated on the same side chain to form N6-acetyl-N6-methyllysine (Kacme), an epigenetic mark of active chromatin associated with increased transcriptional initiation. Specifically binds histone H4 acetyl-methylated at 'Lys-5' and 'Lys-12' (H4K5acme and H4K12acme, respectively). The sequence is that of Bromodomain-containing protein 2 (BRD2) from Canis lupus familiaris (Dog).